Consider the following 538-residue polypeptide: Chaperonin GroEL (538 aa).

ATP is bound by residues 30–33, 87–91, Gly-415, 479–481, and Asp-495; these read TLGP, DGTTT, and DAA.

The protein belongs to the chaperonin (HSP60) family. In terms of assembly, forms a cylinder of 14 subunits composed of two heptameric rings stacked back-to-back. Interacts with the co-chaperonin GroES.

Its subcellular location is the cytoplasm. It carries out the reaction ATP + H2O + a folded polypeptide = ADP + phosphate + an unfolded polypeptide.. In terms of biological role, together with its co-chaperonin GroES, plays an essential role in assisting protein folding. The GroEL-GroES system forms a nano-cage that allows encapsulation of the non-native substrate proteins and provides a physical environment optimized to promote and accelerate protein folding. This is Chaperonin GroEL from Dictyoglomus turgidum (strain DSM 6724 / Z-1310).